A 434-amino-acid chain; its full sequence is Nuclear distribution protein PAC1 (434 aa).

A LisH domain is found at 8–40 (QKDDLHKAMLDYLYANNHTAAFNALKESAGITY). Residues 57-83 (TSVIRLQKKIMELENRNAALQEELSMS) adopt a coiled-coil conformation. 7 WD repeats span residues 106 to 147 (GHRA…RTLK), 149 to 187 (HTKPVNDLDFDHKGHLLVTCSSDLFIKIWDSQNEWKNTK), 191 to 230 (GHDHAVSAVRFMPGDQLIVSASRDRTIRVFDVASTHQVRT), 233 to 272 (GHSEWVRCVIPSADGTMLASGSKDQTVRLWDPLTGEPKSE), 275 to 334 (GHEN…MIRN), 337 to 378 (GHDN…RIVE), and 401 to 434 (KKVNGVDSVDAEPEKVVNVVATGSVDETIKIWLP).

It belongs to the WD repeat LIS1/nudF family. As to quaternary structure, self-associates. Interacts with NDL1 and dynein.

The protein localises to the cytoplasm. It is found in the cytoskeleton. The protein resides in the spindle pole. Functionally, positively regulates the activity of the minus-end directed microtubule motor protein dynein. May enhance dynein-mediated microtubule sliding by targeting dynein to the microtubule plus end. Required for nuclear migration during vegetative growth as well as development. Required for retrograde early endosome (EE) transport from the hyphal tip. Required for localization of dynein to the mitotic spindle poles. Recruits additional proteins to the dynein complex at SPBs. The protein is Nuclear distribution protein PAC1 of Coprinopsis cinerea (strain Okayama-7 / 130 / ATCC MYA-4618 / FGSC 9003) (Inky cap fungus).